We begin with the raw amino-acid sequence, 457 residues long: Glycine receptor subunit alpha-1 (457 aa).

Residues 1 to 28 (MYSFNTLRLYLWETIVFFSLAASKEAEA) form the signal peptide. At 29–250 (ARSASKPMSP…RFHLERQMGY (222 aa)) the chain is on the extracellular side. The N-linked (GlcNAc...) asparagine glycan is linked to N66. Glycine contacts are provided by R93 and S157. An intrachain disulfide couples C166 to C180. The Zn(2+) site is built by E220 and D222. An intrachain disulfide couples C226 to C237. Residue 230–235 (YNTGKF) participates in strychnine binding. Residue T232 coordinates glycine. Residue H243 coordinates Zn(2+). Residues 251-272 (YLIQMYIPSLLIVILSWISFWI) form a helical membrane-spanning segment. Residues 273–277 (NMDAA) lie on the Cytoplasmic side of the membrane. Residues 278–298 (PARVGLGITTVLTMTTQSSGS) form a helical membrane-spanning segment. Topologically, residues 299–309 (RASLPKVSYVK) are extracellular. The helical transmembrane segment at 310–330 (AIDIWMAVCLLFVFSALLEYA) threads the bilayer. At 331–425 (AVNFVSRQHK…FIQRAKKIDK (95 aa)) the chain is on the cytoplasmic side. A disordered region spans residues 391 to 410 (KGANNSNTTNPPPAPSKSPE). Residues 426 to 446 (ISRIGFPMAFLIFNMFYWIIY) traverse the membrane as a helical segment. Residues 447-457 (KIVRREDVHNQ) are Extracellular-facing.

It belongs to the ligand-gated ion channel (TC 1.A.9) family. Glycine receptor (TC 1.A.9.3) subfamily. GLRA1 sub-subfamily. Interacts with GLRB to form heteropentameric channels; this is probably the predominant form in vivo. Heteropentamer composed of four GLRA1 subunits and one GLRB subunit. Heteropentamer composed of two GLRA1 and three GLRB. Heteropentamer composed of three GLRA1 and two GLRB. Homopentamer (in vitro). Both homopentamers and heteropentamers form functional ion channels, but their characteristics are subtly different. In terms of tissue distribution, detected on spinal cord neurons (at protein level). Detected in spinal cord.

Its subcellular location is the postsynaptic cell membrane. It is found in the synapse. The protein resides in the perikaryon. It localises to the cell projection. The protein localises to the dendrite. Its subcellular location is the cell membrane. It carries out the reaction chloride(in) = chloride(out). With respect to regulation, channel opening is triggered by extracellular glycine. Channel characteristics depend on the subunit composition; heteropentameric channels are activated by lower glycine levels and display faster desensitization. In terms of biological role, subunit of heteromeric glycine-gated chloride channels. Plays an important role in the down-regulation of neuronal excitability. Contributes to the generation of inhibitory postsynaptic currents. Channel activity is potentiated by ethanol. Potentiation of channel activity by intoxicating levels of ethanol contribute to the sedative effects of ethanol. This is Glycine receptor subunit alpha-1 (GLRA1) from Bos taurus (Bovine).